We begin with the raw amino-acid sequence, 257 residues long: Ribonuclease PH (257 aa).

Phosphate contacts are provided by residues R88 and 126–128; that span reads GTR.

It belongs to the RNase PH family. As to quaternary structure, homohexameric ring arranged as a trimer of dimers.

The enzyme catalyses tRNA(n+1) + phosphate = tRNA(n) + a ribonucleoside 5'-diphosphate. Phosphorolytic 3'-5' exoribonuclease that plays an important role in tRNA 3'-end maturation. Removes nucleotide residues following the 3'-CCA terminus of tRNAs; can also add nucleotides to the ends of RNA molecules by using nucleoside diphosphates as substrates, but this may not be physiologically important. Probably plays a role in initiation of 16S rRNA degradation (leading to ribosome degradation) during starvation. The sequence is that of Ribonuclease PH from Nocardia farcinica (strain IFM 10152).